The chain runs to 1044 residues: MEPRLRVFELARELGVDSKRVLEVLQSLNVDVKNHMSTIDQKTAEKVTDAVRRTEAQEGQGAGKSAAKSAKPAAQPKPTREANPAKTSLLEDFFGSGTRPQRPLSEKRERRPLTERRPLAERRPLAERPLVDRPVTERPLAERPAAELRPGAAKAAAPARPAAEAQPVAERRAPAEAAQAAQAERRPAEKAQPAAAAKAAPPEKAGAAPVPGAVAEQKQAATPAAAEQKPAGKAEQTAGAAQAKPARAEAGTGASSRPASAAPAAQGEKRPAAAAERREEPQAEAPQTSGPSRPVPAGPGQPARPAGSGIGVPVKPAAGGKSGLGLPTRPGEKAADGARGGGSGIGLPVKPAAGQGTAARAGGLGLPQKPKAGAPRPGGGLGAPQRPGRRGAPLAIPKLDPKVAEQAKAGEGKPRYGQSGDKRRADLYDRREHPSSQPSEEKLFGQRPKRKASAQERRVLKPITVTGPMSVKDLAHEMGVTAAEVIKTLLTGFGIMATINQELDVDTCVLVASEFGVEATVEQKEDIIEVYDRVEDPDEPAELKKPRHPVVTIMGHVDHGKTSLLDAIRQAKVAAGEAGGITQHIGAYEVELNGRKITFLDTPGHEAFTAMRARGANVTDIAVLVVAADDSVMPQTVESINHAKAANVPILVAINKIDKPEANPQRVMQDLTQYGLVPEEWGGDTIMVPVSAKQKTNLDLLLENILVLAEVSDLKANPDKPAAGTILEAALDKARGPVATVLVQAGTLNTGDVFVAGTSWGRVRAMFDHRGRKLKSAGPSTPVRVLGFDSVPQAGDVFRVTPDEKTARAIAEKRIAKAQAERLAQKAISLDDFMNQVAQGEIKDLNVIVKADVQGSVEAIRGQLEKLRNEEVKVKVIHAGVGAISESDVMLAVASKAIIIGFNVRPDDRASRAADEHGIDVRTYSVIYDIVDDIEAAMKGMLKPKIEEVILGKAEVRETFKVPKVGMAAGCMVIQGKVTRNARYRLIRDGVVVWDGEINALRRFKDEVREVSEGYECGITLQNFHDFKRGDILEAYELQEIKAG.

The tract at residues Glu-55 to Arg-458 is disordered. The segment covering Gln-57 to Lys-77 has biased composition (low complexity). Residues Leu-104–Ala-146 show a composition bias toward basic and acidic residues. Composition is skewed to low complexity over residues Glu-147–Val-168, Lys-190–Ala-231, and Ala-254–Ala-265. Basic and acidic residues predominate over residues Gly-267 to Pro-281. 2 stretches are compositionally biased toward low complexity: residues Ala-352 to Pro-375 and Ala-383 to Ala-395. Residues Leu-399–Phe-444 are compositionally biased toward basic and acidic residues. One can recognise a tr-type G domain in the interval Pro-546–Leu-714. The segment at Gly-555–Thr-562 is G1. Gly-555–Thr-562 is a binding site for GTP. Positions Gly-580–His-584 are G2. Positions Asp-601–Gly-604 are G3. Residues Asp-601 to His-605 and Asn-655 to Asp-658 contribute to the GTP site. Residues Asn-655–Asp-658 form a G4 region. The tract at residues Ser-691–Lys-693 is G5.

This sequence belongs to the TRAFAC class translation factor GTPase superfamily. Classic translation factor GTPase family. IF-2 subfamily.

The protein resides in the cytoplasm. Functionally, one of the essential components for the initiation of protein synthesis. Protects formylmethionyl-tRNA from spontaneous hydrolysis and promotes its binding to the 30S ribosomal subunits. Also involved in the hydrolysis of GTP during the formation of the 70S ribosomal complex. The polypeptide is Translation initiation factor IF-2 (Symbiobacterium thermophilum (strain DSM 24528 / JCM 14929 / IAM 14863 / T)).